Consider the following 393-residue polypeptide: Protein TsgA (393 aa).

The next 12 helical transmembrane spans lie at 11 to 31 (WISF…GMVM), 51 to 71 (FLNA…EIVP), 78 to 98 (FGFL…SLAL), 101 to 121 (TAMF…TFLI), 140 to 160 (FFSM…AHSI), 162 to 182 (WYWV…LTFG), 206 to 226 (IGVL…LGFI), 245 to 265 (TLVS…SFIL), 273 to 293 (ILTV…TGTP), 297 to 317 (AWSI…IITL), 332 to 352 (FVLT…GPIV), and 361 to 381 (LLTA…LGFV).

The protein belongs to the major facilitator superfamily. TsgA family.

It localises to the cell inner membrane. The sequence is that of Protein TsgA from Shigella boydii serotype 18 (strain CDC 3083-94 / BS512).